The chain runs to 86 residues: Large ribosomal subunit protein bL31m (86 aa).

The transit peptide at 1–18 (MKCSLRLFEKAGRLSVRS) directs the protein to the mitochondrion.

Belongs to the bacterial ribosomal protein bL31 family. Highly divergent. Component of the mitochondrial large ribosomal subunit (mt-LSU). Mature yeast 74S mitochondrial ribosomes consist of a small (37S) and a large (54S) subunit. The 37S small subunit contains a 15S ribosomal RNA (15S mt-rRNA) and at least 32 different proteins. The 54S large subunit contains a 21S rRNA (21S mt-rRNA) and at least 45 different proteins.

The protein resides in the mitochondrion. In terms of biological role, component of the mitochondrial ribosome (mitoribosome), a dedicated translation machinery responsible for the synthesis of mitochondrial genome-encoded proteins, including at least some of the essential transmembrane subunits of the mitochondrial respiratory chain. The mitoribosomes are attached to the mitochondrial inner membrane and translation products are cotranslationally integrated into the membrane. In Schizosaccharomyces pombe (strain 972 / ATCC 24843) (Fission yeast), this protein is Large ribosomal subunit protein bL31m (tam9).